Consider the following 1513-residue polypeptide: DNA-directed RNA polymerase subunit beta'' (1513 aa).

Zn(2+) is bound by residues Cys-220, Cys-296, Cys-303, and Cys-306. The segment at 644–769 (RTREKDSENE…EYGNPEEDSV (126 aa)) is disordered. The segment covering 659–679 (NEYRTREEECKTLEDEYRTRE) has biased composition (basic and acidic residues). Over residues 680–707 (EEYETLEDEYGIPENEYETLEDEYGILE) the composition is skewed to acidic residues. Basic and acidic residues predominate over residues 726-737 (NKYRPREDKYGT). The segment covering 738 to 767 (LEEDSEDEHGTLEEDSEEDSEDEYGNPEED) has biased composition (acidic residues).

The protein belongs to the RNA polymerase beta' chain family. RpoC2 subfamily. In terms of assembly, in plastids the minimal PEP RNA polymerase catalytic core is composed of four subunits: alpha, beta, beta', and beta''. When a (nuclear-encoded) sigma factor is associated with the core the holoenzyme is formed, which can initiate transcription. It depends on Zn(2+) as a cofactor.

It is found in the plastid. The protein localises to the chloroplast. The catalysed reaction is RNA(n) + a ribonucleoside 5'-triphosphate = RNA(n+1) + diphosphate. In terms of biological role, DNA-dependent RNA polymerase catalyzes the transcription of DNA into RNA using the four ribonucleoside triphosphates as substrates. This chain is DNA-directed RNA polymerase subunit beta'', found in Oryza nivara (Indian wild rice).